A 66-amino-acid chain; its full sequence is Beta-toxin Cb2 (66 aa).

Residues 1-66 (KEGYLVDLHT…VWPLPNKRCK (66 aa)) form the LCN-type CS-alpha/beta domain. Cystine bridges form between C12-C65, C16-C41, C25-C46, and C29-C48.

It belongs to the long (4 C-C) scorpion toxin superfamily. Sodium channel inhibitor family. Beta subfamily. In terms of tissue distribution, expressed by the venom gland.

It localises to the secreted. Its function is as follows. Beta toxins bind voltage-independently at site-4 of sodium channels (Nav) and reduces peak current and shifts the voltage of activation toward more negative potentials thereby affecting sodium channel activation and promoting spontaneous and repetitive firing. Has an inhibitory effect on voltage-gated sodium channel hNav1.6/SCN8A, affecting both the activation and inactivation processes. Also reduces the peak current of hNav1.5/SCN5A but does not shift its voltage of activation. This toxin is active against mammals and lethal to mice. This chain is Beta-toxin Cb2, found in Centruroides baergi (Scorpion).